The sequence spans 256 residues: UPF0644 protein PB2B4.06 (256 aa).

Residues 34–56 (GVVYAGVSGTCAAAGYMFGNFVM) form a helical membrane-spanning segment.

Belongs to the UPF0644 family.

The protein resides in the mitochondrion membrane. The polypeptide is UPF0644 protein PB2B4.06 (Schizosaccharomyces pombe (strain 972 / ATCC 24843) (Fission yeast)).